A 69-amino-acid chain; its full sequence is UPF0337 protein ECA0631 (69 aa).

It belongs to the UPF0337 (CsbD) family.

This Pectobacterium atrosepticum (strain SCRI 1043 / ATCC BAA-672) (Erwinia carotovora subsp. atroseptica) protein is UPF0337 protein ECA0631.